The following is a 711-amino-acid chain: Quinolinate synthase, chloroplastic (711 aa).

The transit peptide at 1–41 (MDVSSLAAAAPSLVAPPLHHKPHLAFPPHHPSPARGSIGVR) directs the protein to the chloroplast. The disordered stretch occupies residues 17 to 63 (PLHHKPHLAFPPHHPSPARGSIGVRCAHSPSPHPLRPSAATADEEVS). Residue cysteine 114 is the Cysteine persulfide intermediate of the active site. Histidine 263 and serine 289 together coordinate iminosuccinate. Residue cysteine 343 participates in [4Fe-4S] cluster binding. Iminosuccinate is bound by residues 372 to 374 (YIN) and serine 394. Cysteine 467 lines the [4Fe-4S] cluster pocket. Iminosuccinate contacts are provided by residues 493 to 495 (HFE) and threonine 518. Cysteine 631 contributes to the [4Fe-4S] cluster binding site.

The protein belongs to the quinolinate synthase family. Type 1 subfamily. Homodimer. It depends on [4Fe-4S] cluster as a cofactor.

Its subcellular location is the plastid. It is found in the chloroplast. The enzyme catalyses iminosuccinate + dihydroxyacetone phosphate = quinolinate + phosphate + 2 H2O + H(+). The protein operates within cofactor biosynthesis; NAD(+) biosynthesis; quinolinate from iminoaspartate: step 1/1. Functionally, catalyzes the condensation of iminoaspartate with dihydroxyacetone phosphate to form quinolinate. This is Quinolinate synthase, chloroplastic from Oryza sativa subsp. japonica (Rice).